A 623-amino-acid polypeptide reads, in one-letter code: Peptidoglycan D,D-transpeptidase MrdA (623 aa).

The chain crosses the membrane as a helical span at residues 17–37 (VIVAFGVVVVCFGILIFNLYN). Ser-326 (acyl-ester intermediate) is an active-site residue.

The protein belongs to the transpeptidase family. MrdA subfamily.

The protein resides in the cell inner membrane. It carries out the reaction Preferential cleavage: (Ac)2-L-Lys-D-Ala-|-D-Ala. Also transpeptidation of peptidyl-alanyl moieties that are N-acyl substituents of D-alanine.. Its pathway is cell wall biogenesis; peptidoglycan biosynthesis. Its function is as follows. Catalyzes cross-linking of the peptidoglycan cell wall. This Salmonella typhimurium (strain SL1344) protein is Peptidoglycan D,D-transpeptidase MrdA.